A 529-amino-acid polypeptide reads, in one-letter code: All-trans-zeta-carotene desaturase (529 aa).

12 to 45 (IVVGAGPGGLSAAINLAGQGFRVTVVEKDAVPGG) serves as a coordination point for FAD.

Belongs to the carotenoid/retinoid oxidoreductase family. It depends on FAD as a cofactor.

It carries out the reaction all-trans-zeta-carotene + 2 A = all-trans-lycopene + 2 AH2. It functions in the pathway carotenoid biosynthesis; lycopene biosynthesis. Functionally, dehydrogenates carotenes in the trans conformation: converts all-trans-zeta-carotene into all-trans-lycopene, one of the last dehydrogenation steps of lycopene biosynthesis. The polypeptide is All-trans-zeta-carotene desaturase (carC) (Myxococcus xanthus).